Consider the following 979-residue polypeptide: Disks large-associated protein 3 (979 aa).

Positions 1–10 (MRGYHGDRGS) are enriched in basic and acidic residues. Disordered regions lie at residues 1 to 20 (MRGYHGDRGSHPRPARFADQ), 52 to 95 (AGLG…MYPG), 136 to 169 (FHTLPYQRGPAGAGPGPAPGTGTAPEPRSESPSR), 182 to 291 (AKSH…CLEG), 400 to 429 (AMGDEESGDSDGSPKTSPKAVARRFTTRRS), and 537 to 581 (FRKA…RCSS). Ser58 is modified (phosphoserine). Residues 73 to 86 (PEGGPAGAGVGGGS) are compositionally biased toward gly residues. Residues 190–202 (PGKRDYNGPKAEG) show a composition bias toward basic and acidic residues. Gly residues predominate over residues 203 to 218 (RGGSGGDSYPGPGSGG). Residues 221-246 (TSHHHHHHHHHHHHQSRHGKRSKSKD) show a composition bias toward basic residues. Phosphoserine occurs at positions 406, 409, 412, and 416. Residues 540-549 (APPPIPPGSQ) are compositionally biased toward pro residues. Residues Ser643 and Ser645 each carry the phosphoserine modification. 2 disordered regions span residues 741–790 (EGYP…RASP) and 908–940 (EEKKVPPPIPKKPLRGRGVPVKERSLDSVDRQR). 2 stretches are compositionally biased toward basic and acidic residues: residues 769-779 (GRRDSWIERGS) and 927-940 (PVKERSLDSVDRQR). 3 positions are modified to phosphoserine: Ser932, Ser935, and Ser967.

Belongs to the SAPAP family. Interacts with DLG4/PSD-95.

The protein localises to the cell membrane. The protein resides in the postsynaptic density. Its subcellular location is the synapse. In terms of biological role, may play a role in the molecular organization of synapses and neuronal cell signaling. Could be an adapter protein linking ion channel to the subsynaptic cytoskeleton. May induce enrichment of PSD-95/SAP90 at the plasma membrane. This is Disks large-associated protein 3 (DLGAP3) from Homo sapiens (Human).